The following is a 508-amino-acid chain: Photosystem II CP47 reaction center protein (508 aa).

The next 6 membrane-spanning stretches (helical) occupy residues 21–36 (SVHIMHTALVAGWAGS), 101–115 (IVFSGLCFLAAIWHW), 140–156 (GIHLFLSGVACFGFGAF), 203–218 (IAAGTLGILAGLFHLS), 237–252 (VLSSSIAAVFFAAFVV), and 457–472 (SFALLFFFGHIWHGAR).

It belongs to the PsbB/PsbC family. PsbB subfamily. As to quaternary structure, PSII is composed of 1 copy each of membrane proteins PsbA, PsbB, PsbC, PsbD, PsbE, PsbF, PsbH, PsbI, PsbJ, PsbK, PsbL, PsbM, PsbT, PsbX, PsbY, PsbZ, Psb30/Ycf12, at least 3 peripheral proteins of the oxygen-evolving complex and a large number of cofactors. It forms dimeric complexes. Requires Binds multiple chlorophylls. PSII binds additional chlorophylls, carotenoids and specific lipids. as cofactor.

Its subcellular location is the plastid. The protein resides in the chloroplast thylakoid membrane. Its function is as follows. One of the components of the core complex of photosystem II (PSII). It binds chlorophyll and helps catalyze the primary light-induced photochemical processes of PSII. PSII is a light-driven water:plastoquinone oxidoreductase, using light energy to abstract electrons from H(2)O, generating O(2) and a proton gradient subsequently used for ATP formation. The sequence is that of Photosystem II CP47 reaction center protein from Eucalyptus globulus subsp. globulus (Tasmanian blue gum).